The primary structure comprises 230 residues: Claudin-2 (230 aa).

Over 1–7 (MASLGVQ) the chain is Cytoplasmic. The helical transmembrane segment at 8–28 (LVGYILGLLGLLGTSIAMLLP) threads the bilayer. Residues 29–81 (NWRTSSYVGASIVTAVGFSKGLWMECATHSTGITQCDIYSTLLGLPADIQAAQ) are Extracellular-facing. A disulfide bridge links cysteine 54 with cysteine 64. A helical transmembrane segment spans residues 82 to 102 (AMMVTSSAMSSLACIISVVGM). The Cytoplasmic segment spans residues 103-116 (RCTVFCQDSRAKDR). Residues 117–137 (VAVVGGVFFILGGILGFIPVA) traverse the membrane as a helical segment. Over 138 to 162 (WNLHGILRDFYSPLVPDSMKFEIGE) the chain is Extracellular. The helical transmembrane segment at 163–183 (ALYLGIISALFSLVAGVILCF) threads the bilayer. The Cytoplasmic portion of the chain corresponds to 184-230 (SCSPQGNRTNYYDGYQAQPLATRSSPRSAQQPKAKSEFNSYSLTGYV). Residues 205-230 (TRSSPRSAQQPKAKSEFNSYSLTGYV) are disordered. Lysine 218 is covalently cross-linked (Glycyl lysine isopeptide (Lys-Gly) (interchain with G-Cter in SUMO)). Residues serine 219 and serine 223 each carry the phosphoserine modification. The interval 229–230 (YV) is interactions with TJP1, TJP2 and TJP3.

The protein belongs to the claudin family. In terms of assembly, can form homo- and heteropolymers with other claudins to mediate paracellular barrier and channel functions of tight junctions in response to physiological stimuli. Homopolymers interact with CLDN3, but not CLDN1, homopolymers. Directly interacts with TJP1/ZO-1, TJP2/ZO-2 and TJP3/ZO-3. The disulfide bond is necessary for pore formation, but is not required for correct protein trafficking. Expressed in the kidney, liver and intestine, with higher levels in the ileum than in the jejunum. Low levels in the brain. Expressed in colonic epithelium (at protein level). Expressed in the perivenous regions, bile ducts, and gallbladder epithelium (at protein level).

Its subcellular location is the cell junction. It is found in the tight junction. The protein localises to the cell membrane. The enzyme catalyses Na(+)(in) = Na(+)(out). It catalyses the reaction K(+)(in) = K(+)(out). The catalysed reaction is Rb(+)(in) = Rb(+)(out). It carries out the reaction Li(+)(in) = Li(+)(out). The enzyme catalyses Cs(+)(in) = Cs(+)(out). It catalyses the reaction Ca(2+)(in) = Ca(2+)(out). The catalysed reaction is methylamine(out) = methylamine(in). It carries out the reaction choline(out) = choline(in). The enzyme catalyses H2O(in) = H2O(out). The channel permeability is down-regulated at acidic pH. Its function is as follows. Forms paracellular channels: polymerizes in tight junction strands with cation- and water-selective channels through the strands, conveying epithelial permeability in a process known as paracellular tight junction permeability. In intestinal epithelium, allows for sodium and water fluxes from the peritoneal side to the lumen of the intestine to regulate nutrient absorption and clear enteric pathogens as part of mucosal immune response. In kidney, allows passive sodium and calcium reabsorption across proximal tubules from the lumen back to the bloodstream. In the hepatobiliary tract, allows paracellular water and cation fluxes in the hepatic perivenous areas and biliary epithelium to generate bile flow and maintain osmotic gradients. The sequence is that of Claudin-2 from Mus musculus (Mouse).